The primary structure comprises 430 residues: MERRRITSARRSYASETVVRGLGPSRQLGTMPRFSLSRMTPPLPARVDFSLAGALNAGFKETRASERAEMMELNDRFASYIEKVRFLEQQNKALAAELNQLRAKEPTKLADVYQAELRELRLRLDQLTANSARLEVERDNFAQDLGTLRQKLQDETNLRLEAENNLAAYRQEADEATLARVDLERKVESLEEEIQFLRKIYEEEVRELREQLAQQQVHVEMDVAKPDLTAALREIRTQYEAVATSNMQETEEWYRSKFADLTDAASRNAELLRQAKHEANDYRRQLQALTCDLESLRGTNESLERQMREQEERHARESASYQEALARLEEEGQSLKEEMARHLQEYQDLLNVKLALDIEIATYRKLLEGEENRITIPVQTFSNLQIRETSLDTKSVSEGHLKRNIVVKTVEMRDGEVIKDSKQEHKDVVM.

The tract at residues Met-1–Glu-69 is head. Thr-7 is subject to Phosphothreonine; by AURKB and ROCK1. Omega-N-methylarginine is present on Arg-11. Ser-12 is subject to Phosphoserine; by AURKB and ROCK1. Arg-20 is subject to Omega-N-methylarginine. Position 33 is a citrulline (Arg-33). Residue Ser-35 is modified to Phosphoserine; by AURKB and ROCK1. Thr-40 bears the Phosphothreonine mark. Residues Glu-66–Ile-374 enclose the IF rod domain. A coil 1A region spans residues Met-70–Leu-101. Residue Ser-79 is modified to Phosphoserine. The linker 1 stretch occupies residues Arg-102–Val-112. Residues Thr-107 and Thr-147 each carry the phosphothreonine modification. Residues Tyr-113 to Gln-211 form a coil 1B region. A linker 12 region spans residues Leu-212–Asp-227. The tract at residues Leu-228–Glu-249 is coil 2A. Positions Thr-250–Trp-253 are linker 2. Residues Tyr-254–Ile-374 form a coil 2B region. Residue Ser-266 is modified to Phosphoserine. Arg-267 bears the Citrulline mark. Ser-320 bears the Phosphoserine mark. The segment at Thr-375–Met-430 is tail. The residue at position 380 (Thr-380) is a Phosphothreonine. Ser-382 is subject to Phosphoserine. A citrulline mark is found at Arg-403 and Arg-413.

It belongs to the intermediate filament family. In terms of assembly, interacts with SYNM. Interacts with PSEN1 (via N-terminus). Phosphorylated by PKN1. In terms of tissue distribution, brain; isoform 2 expressed at 20-fold lower level than isoform 1.

It localises to the cytoplasm. Functionally, GFAP, a class-III intermediate filament, is a cell-specific marker that, during the development of the central nervous system, distinguishes astrocytes from other glial cells. The polypeptide is Glial fibrillary acidic protein (Gfap) (Mus musculus (Mouse)).